The sequence spans 346 residues: Elongation factor Ts (346 aa).

An involved in Mg(2+) ion dislocation from EF-Tu region spans residues 80 to 83 (TDFV).

Belongs to the EF-Ts family.

The protein localises to the cytoplasm. Its function is as follows. Associates with the EF-Tu.GDP complex and induces the exchange of GDP to GTP. It remains bound to the aminoacyl-tRNA.EF-Tu.GTP complex up to the GTP hydrolysis stage on the ribosome. This is Elongation factor Ts from Streptococcus pyogenes serotype M3 (strain ATCC BAA-595 / MGAS315).